The following is a 923-amino-acid chain: DNA mismatch repair protein MutS (923 aa).

Glycine 671 to serine 678 is an ATP binding site.

It belongs to the DNA mismatch repair MutS family.

Functionally, this protein is involved in the repair of mismatches in DNA. It is possible that it carries out the mismatch recognition step. This protein has a weak ATPase activity. This is DNA mismatch repair protein MutS from Rhodopseudomonas palustris (strain BisB5).